The following is a 285-amino-acid chain: GPN-loop GTPase 3 (285 aa).

13 to 18 (GSGKST) contacts GTP. Residues 70-72 (GPN) carry the Gly-Pro-Asn (GPN)-loop; involved in dimer interface motif. 172–175 (TKID) serves as a coordination point for GTP. Residues 253–276 (GEDLEPKEPPLENDDDDDDDEGDE) are disordered. Acidic residues predominate over residues 263-275 (LENDDDDDDDEGD).

This sequence belongs to the GPN-loop GTPase family. Heterodimer with gpn1. Binds to RNA polymerase II (RNAPII).

Small GTPase required for proper localization of RNA polymerase II (RNAPII). May act at an RNAP assembly step prior to nuclear import. This is GPN-loop GTPase 3 (gpn3) from Dictyostelium discoideum (Social amoeba).